Consider the following 567-residue polypeptide: Urease subunit alpha (567 aa).

In terms of domain architecture, Urease spans 129–567 (GGIDSHIHFI…LPLAQRYFLF (439 aa)). Residues histidine 134, histidine 136, and lysine 217 each coordinate Ni(2+). Lysine 217 carries the N6-carboxylysine modification. Histidine 219 is a binding site for substrate. The Ni(2+) site is built by histidine 246 and histidine 272. The Proton donor role is filled by histidine 320. Aspartate 360 provides a ligand contact to Ni(2+).

This sequence belongs to the metallo-dependent hydrolases superfamily. Urease alpha subunit family. In terms of assembly, heterotrimer of UreA (gamma), UreB (beta) and UreC (alpha) subunits. Three heterotrimers associate to form the active enzyme. Requires Ni cation as cofactor. In terms of processing, carboxylation allows a single lysine to coordinate two nickel ions.

The protein localises to the cytoplasm. It catalyses the reaction urea + 2 H2O + H(+) = hydrogencarbonate + 2 NH4(+). It functions in the pathway nitrogen metabolism; urea degradation; CO(2) and NH(3) from urea (urease route): step 1/1. The polypeptide is Urease subunit alpha (Pseudomonas entomophila (strain L48)).